The chain runs to 365 residues: DNA replication and repair protein RecF (365 aa).

30-37 (GDNGEGKT) serves as a coordination point for ATP.

It belongs to the RecF family.

Its subcellular location is the cytoplasm. The RecF protein is involved in DNA metabolism; it is required for DNA replication and normal SOS inducibility. RecF binds preferentially to single-stranded, linear DNA. It also seems to bind ATP. This chain is DNA replication and repair protein RecF, found in Leptospira interrogans serogroup Icterohaemorrhagiae serovar copenhageni (strain Fiocruz L1-130).